The chain runs to 208 residues: MMDIFNSVSESINILNNSVAPMDHREEHEGAPSDKPWGVNFSGHDFLVNSTSRSDIITSVEQVDRTGSCPICASKNDQGTSLAEAMESMVATRQLDSAMSFLSMVRPDLANWDVINYHFSHGIKDPIEKLEYQIDTMIDVHYRAGMAIGRDFAMMVTANGSQFVSPNEKNIKCLSSLTTGLTKLIQVRGDIRKMTTSKKNKRGTAAPL.

This is an uncharacterized protein from Ictalurid herpesvirus 1 (strain Auburn) (IcHV-1).